We begin with the raw amino-acid sequence, 345 residues long: uncharacterized protein (345 aa).

The span at 1–13 (MSKPNTETISVNI) shows a compositional bias: polar residues. The interval 1–23 (MSKPNTETISVNIPESEGVPLPD) is disordered. A coiled-coil region spans residues 283-316 (SLKQRTNILKKQGETLKKNVEDINKDTSNLKRHA).

It localises to the virion. This is an uncharacterized protein from Acanthamoeba polyphaga mimivirus (APMV).